Here is a 358-residue protein sequence, read N- to C-terminus: MDKTSAYQGLFFGALYTLAVGLKHAPILMIESAKQNAWHSYILGVVIVIPALWLMHRLMKKHQDKNIYELLSDSSPIAGRIIILLFSLYFLLINAHDIRFFINLINILFLPRTPMAVLGGVIIFVAICIAREGKETLTRMAQIFLFPFGILVLFLPFTLATQIELQNLTPVFEGLIPYLQSGYYAFGTMGELIILPLLFSNRSVPLKYTIFAILLGALLLAVMLFSSISVFGPNLTSTFFDPAYMVIRQIRITDFLDRSDLIIAAFWIPVIMVKIAGSLYIVVYGLSFLHSKIDPKAMYTPTGMFSVVCGFWFFLNTNQLIDFNRIKPIINVVISLLLPLLIYLIIKSKALFGAKAKH.

10 consecutive transmembrane segments (helical) span residues 10-30 (LFFG…ILMI), 36-56 (NAWH…WLMH), 81-101 (IIIL…IRFF), 107-127 (ILFL…FVAI), 143-163 (IFLF…ATQI), 179-199 (LQSG…PLLF), 210-230 (IFAI…SISV), 262-282 (IIAA…LYIV), 297-317 (AMYT…FLNT), and 326-346 (IKPI…YLII).

Belongs to the amino acid-polyamine-organocation (APC) superfamily. Spore germination protein (SGP) (TC 2.A.3.9) family.

The protein localises to the cell membrane. May be involved in spore germination. This Bacillus subtilis (strain 168) protein is Putative spore germination protein YfkT (yfkT).